The primary structure comprises 116 residues: Flagellar transcriptional regulator FlhD (116 aa).

Belongs to the FlhD family. In terms of assembly, homodimer; disulfide-linked. Forms a heterohexamer composed of two FlhC and four FlhD subunits. Each FlhC binds a FlhD dimer, forming a heterotrimer, and a hexamer assembles by dimerization of two heterotrimers.

It localises to the cytoplasm. Its function is as follows. Functions in complex with FlhC as a master transcriptional regulator that regulates transcription of several flagellar and non-flagellar operons by binding to their promoter region. Activates expression of class 2 flagellar genes, including fliA, which is a flagellum-specific sigma factor that turns on the class 3 genes. Also regulates genes whose products function in a variety of physiological pathways. The protein is Flagellar transcriptional regulator FlhD of Xenorhabdus nematophila (Achromobacter nematophilus).